The sequence spans 146 residues: UPF0260 protein Spea_2441 (146 aa).

The protein belongs to the UPF0260 family.

The polypeptide is UPF0260 protein Spea_2441 (Shewanella pealeana (strain ATCC 700345 / ANG-SQ1)).